We begin with the raw amino-acid sequence, 435 residues long: Methylenetetrahydrofolate--tRNA-(uracil-5-)-methyltransferase TrmFO (435 aa).

9–14 (GAGLAG) is a binding site for FAD.

It belongs to the MnmG family. TrmFO subfamily. It depends on FAD as a cofactor.

It is found in the cytoplasm. It catalyses the reaction uridine(54) in tRNA + (6R)-5,10-methylene-5,6,7,8-tetrahydrofolate + NADH + H(+) = 5-methyluridine(54) in tRNA + (6S)-5,6,7,8-tetrahydrofolate + NAD(+). The catalysed reaction is uridine(54) in tRNA + (6R)-5,10-methylene-5,6,7,8-tetrahydrofolate + NADPH + H(+) = 5-methyluridine(54) in tRNA + (6S)-5,6,7,8-tetrahydrofolate + NADP(+). Functionally, catalyzes the folate-dependent formation of 5-methyl-uridine at position 54 (M-5-U54) in all tRNAs. This Staphylococcus aureus (strain MRSA252) protein is Methylenetetrahydrofolate--tRNA-(uracil-5-)-methyltransferase TrmFO.